We begin with the raw amino-acid sequence, 158 residues long: Botcinic acid biosynthesis cluster B protein 16 (158 aa).

It functions in the pathway polyketide biosynthesis. Functionally, part of the gene cluster B that mediates the biosynthesis of botcinic acid and its botcinin derivatives, acetate-derived polyketides that contribute to virulence when combined with the sesquiterpene botrydial. Botcinic acid and its derivatives have been shown to induce chlorosis and necrosis during host plant infection, but also have antifungal activities. Two polyketide synthases, BOA6 and BOA9, are involved in the biosynthesis of botcinins. BOA6 mediates the formation of the per-methylated tetraketide core by condensation of four units of malonyl-CoA with one unit of acetyl-CoA, which would be methylated in activated methylene groups to yield a bicyclic acid intermediate that could then either be converted to botrylactone derivatives or lose the starter acetate unit through a retro-Claisen type C-C bond cleavage to yield botcinin derivatives. The second polyketide synthase, BOA9, is probably required for the biosynthesis of the tetraketide side chain of botcinins. The methyltransferase (MT) domain within BOA6 is probably responsible for the incorporation of four methyl groups. The trans-enoyl reductase BOA5 might take over the enoyl reductase function of BOA6 that misses an ER domain. The monooxygenases BOA2, BOA3 and BOA4 might be involved in further hydroxylations at C4, C5 and C8, whereas BOA7, close to BOA9, could potentially be involved in the hydroxylation at C4 in the side chain of botcinins. In Botryotinia fuckeliana (strain B05.10) (Noble rot fungus), this protein is Botcinic acid biosynthesis cluster B protein 16.